A 275-amino-acid polypeptide reads, in one-letter code: MRHHGRMHARESDVAGGPARDSAGGPARDSAGGPARDSAGDDSPSAHRHRRVTSFRSRRSALSGGQQDTWERLWPELGTEARDDDGRPAALIDTAAWFGRTAPLVLEIGSGTGTSTLAMAQDEPDIDVIAVEVYRRGLAQLLTGIDRAGVRNIRMIRGDGVDVLEYMVASGSLTGVRVFFPDPWPKARHHKRRLLQPSTVALIADRLRPGGILHAATDHAGYAEQIAAVGDAEPLLRRVDLTDDLPISVRRPVTKYERKALAGPDVAELLWEKVP.

The disordered stretch occupies residues 1 to 73; the sequence is MRHHGRMHAR…GGQQDTWERL (73 aa). Positions 46-59 are enriched in basic residues; that stretch reads AHRHRRVTSFRSRR. The S-adenosyl-L-methionine site is built by Glu107, Glu132, Asp159, and Asp182. Asp182 is an active-site residue. Residues Lys186, Asp218, and 254–257 each bind substrate; that span reads TKYE.

This sequence belongs to the class I-like SAM-binding methyltransferase superfamily. TrmB family.

The catalysed reaction is guanosine(46) in tRNA + S-adenosyl-L-methionine = N(7)-methylguanosine(46) in tRNA + S-adenosyl-L-homocysteine. Its pathway is tRNA modification; N(7)-methylguanine-tRNA biosynthesis. Catalyzes the formation of N(7)-methylguanine at position 46 (m7G46) in tRNA. This is tRNA (guanine-N(7)-)-methyltransferase from Mycobacterium sp. (strain KMS).